The primary structure comprises 91 residues: Acyl carrier protein (91 aa).

The region spanning 6 to 81 is the Carrier domain; that stretch reads EEIIAELGQI…DIVAYIQKLE (76 aa). O-(pantetheine 4'-phosphoryl)serine is present on Ser-41.

It belongs to the acyl carrier protein (ACP) family. In terms of processing, 4'-phosphopantetheine is transferred from CoA to a specific serine of apo-ACP by AcpS. This modification is essential for activity because fatty acids are bound in thioester linkage to the sulfhydryl of the prosthetic group.

The protein localises to the cytoplasm. It participates in lipid metabolism; fatty acid biosynthesis. Its function is as follows. Carrier of the growing fatty acid chain in fatty acid biosynthesis. This chain is Acyl carrier protein, found in Rhodococcus erythropolis (strain PR4 / NBRC 100887).